The sequence spans 1337 residues: Protein cordon-bleu (1337 aa).

Residues 1-41 (MDAPRALAAKPPTGRKMKARAPPPPGKPAAQNVHSEQKLPH) form a disordered region. Residues S47, S50, S212, S235, S272, and S294 each carry the phosphoserine modification. Disordered stretches follow at residues 260 to 556 (SKAE…NDDE) and 647 to 768 (IASQ…HHGQ). Residues 288 to 317 (CVTTPNSPSLHSRSLTLGPSLSLGNISGVS) show a composition bias toward polar residues. A KKRRAP 1 motif is present at residues 323–328 (KKRRAP). A phosphoserine mark is found at S346 and S349. Positions 356–361 (KKRRAP) match the KKRRAP 2 motif. Residues 361–374 (PAPPPPQQPPPSPV) are compositionally biased toward pro residues. Position 372 is a phosphoserine (S372). Residues 377-387 (NRKEDKEENRK) are compositionally biased toward basic and acidic residues. Pro residues predominate over residues 411–423 (LVLPPPPPYPPPD). Residues 469-480 (ESEETASEDTTE) show a composition bias toward acidic residues. Polar residues predominate over residues 484-500 (VMSSPSDAISLDSQQDS). Position 522 is a phosphothreonine (T522). Positions 526 to 541 (GPQKSPSWGKSGSGSS) are enriched in low complexity. Composition is skewed to polar residues over residues 647 to 666 (IASQRSHLSPSQTEHSQPFV) and 687 to 710 (QPTLANTSENENPVETDPTVTSLV). Residue S649 is modified to Phosphoserine. The segment covering 714–736 (LIDDPKAKDKGKVHGSSHSEKTQ) has biased composition (basic and acidic residues). S816 is subject to Phosphoserine. Disordered stretches follow at residues 892–923 (TPQQQPASQEYGAHLEEERSRPQSAVSCSVKV) and 967–991 (KATTEQCHEEAKLARSPPTRKDDAA). The residue at position 1038 (S1038) is a Phosphoserine. Over residues 1070 to 1090 (GFNEKQTTSNQKANSTSNFSQ) the composition is skewed to polar residues. 4 disordered regions span residues 1070–1094 (GFNEKQTTSNQKANSTSNFSQALDK), 1113–1133 (MNGSARTPGNCEPPHSPKEST), 1145–1168 (KPSSLSTDGQDADDTLPSSIFGPK), and 1192–1221 (AIHSSGGREKLRKTAEQTSEGRPKKPSYVE). Residue S1128 is modified to Phosphoserine. 2 WH2 domains span residues 1185 to 1205 (LHSALMEAIHSSGGREKLRKT) and 1225 to 1245 (ERSALLAAIRGHSGTLSLRKV). A compositionally biased stretch (basic and acidic residues) spans 1197–1214 (GGREKLRKTAEQTSEGRP). Residues 1262 to 1310 (GAPGLDKPQQEDLGLPPPPALPPPPAPAPQAPSASVTVSRFSTGTPSNS) form a disordered region. Positions 1276 to 1291 (LPPPPALPPPPAPAPQ) are enriched in pro residues. A compositionally biased stretch (polar residues) spans 1297-1310 (VTVSRFSTGTPSNS). At S1303 the chain carries Phosphoserine. The WH2 3 domain maps to 1313–1333 (ARQALMDAIRSGTGAARLRKV).

In terms of assembly, identified in a complex composed of COBL, PACSIN1 and WASL. Interacts with PACSIN1, PACSIN2 and PACSIN3. Identified in a complex composed of ACTA1, COBL, GSN and TMSB4X. Interacts (via WH2 domains) with actin monomers. Interacts with DBNL. As to expression, detected in brain cortex and in the Purkinje cell layer in the cerebellum. Detected in hippocampus neurons, and at lower levels in testis, lung and spleen (at protein level). Detected in embryonic neural tube.

The protein resides in the cell membrane. It is found in the cytoplasm. The protein localises to the cytoskeleton. It localises to the cell projection. Its subcellular location is the ruffle. Functionally, plays an important role in the reorganization of the actin cytoskeleton. Binds to and sequesters actin monomers (G actin). Nucleates actin polymerization by assembling three actin monomers in cross-filament orientation and thereby promotes growth of actin filaments at the barbed end. Can also mediate actin depolymerization at barbed ends and severing of actin filaments. Promotes formation of cell ruffles. Regulates neuron morphogenesis and increases branching of axons and dendrites. Regulates dendrite branching in Purkinje cells. In Mus musculus (Mouse), this protein is Protein cordon-bleu (Cobl).